The sequence spans 386 residues: Synaptotagmin-5 (386 aa).

The segment covering 1-16 (MFPEPPTLGSPAPKTP) has biased composition (pro residues). Positions 1–21 (MFPEPPTLGSPAPKTPPDSSR) are disordered. The Vesicular segment spans residues 1–24 (MFPEPPTLGSPAPKTPPDSSRIRQ). The helical transmembrane segment at 25–45 (GAVPAWVLATIVLGSGLLVFS) threads the bilayer. Residues 46–386 (SCFCLYRKRC…PDRARPIPAP (341 aa)) lie on the Cytoplasmic side of the membrane. C2 domains lie at 108–227 (QLGR…QAWR) and 239–372 (KLGD…AQWH). Ca(2+) is bound by residues Leu138, Asp139, Asp145, Asp197, Phe198, Asp199, Ser202, Asp205, Asp270, Asp276, Asp330, and Asp332.

It belongs to the synaptotagmin family. Homodimer. Interacts with both alpha- and beta-tubulin. The cofactor is Ca(2+).

The protein resides in the cytoplasmic vesicle. It localises to the secretory vesicle. It is found in the synaptic vesicle membrane. Its subcellular location is the recycling endosome membrane. In terms of biological role, may be involved in Ca(2+)-dependent exocytosis of secretory vesicles through Ca(2+) and phospholipid binding to the C2 domain or may serve as Ca(2+) sensors in the process of vesicular trafficking and exocytosis. Regulates the Ca(2+)-dependent secretion of norepinephrine in PC12 cells. Required for export from the endocytic recycling compartment to the cell surface. In Mus musculus (Mouse), this protein is Synaptotagmin-5 (Syt5).